A 143-amino-acid chain; its full sequence is Translation initiation factor 2 subunit beta (143 aa).

Belongs to the eIF-2-beta/eIF-5 family. In terms of assembly, heterotrimer composed of an alpha, a beta and a gamma chain.

Functionally, eIF-2 functions in the early steps of protein synthesis by forming a ternary complex with GTP and initiator tRNA. This chain is Translation initiation factor 2 subunit beta (eif2b), found in Methanocaldococcus jannaschii (strain ATCC 43067 / DSM 2661 / JAL-1 / JCM 10045 / NBRC 100440) (Methanococcus jannaschii).